The following is a 417-amino-acid chain: 3-ketoacyl-CoA thiolase, peroxisomal (417 aa).

A peroxisome-targeting transit peptide spans 1-15; that stretch reads MSQRLQSIKDHLVES. The PTS2-type peroxisomal targeting signal stretch occupies residues 1-15; sequence MSQRLQSIKDHLVES. C125 acts as the Acyl-thioester intermediate in catalysis. Residues H375 and C403 each act as proton acceptor in the active site.

The protein belongs to the thiolase-like superfamily. Thiolase family. Homodimer. Interacts (via PTS2-type peroxisomal targeting signal region) with PEX7; leading to its translocation into peroxisomes.

The protein resides in the peroxisome. It is found in the mitochondrion intermembrane space. The catalysed reaction is an acyl-CoA + acetyl-CoA = a 3-oxoacyl-CoA + CoA. Its pathway is lipid metabolism; fatty acid metabolism. Its function is as follows. Responsible for the thiolytic cleavage of straight chain 3-keto fatty acyl-CoAs (3-oxoacyl-CoAs). This is 3-ketoacyl-CoA thiolase, peroxisomal (POT1) from Saccharomyces cerevisiae (strain ATCC 204508 / S288c) (Baker's yeast).